Here is a 421-residue protein sequence, read N- to C-terminus: Subtilisin-like protease 2 (421 aa).

Positions 1–16 are cleaved as a signal peptide; sequence MQLLNFGLLLLPFVAG. Residues 17-122 constitute a propeptide that is removed on maturation; the sequence is DLAPQPEPLL…VHPDQHVYLA (106 aa). One can recognise an Inhibitor I9 domain in the interval 36–122; the sequence is QYIVTLKEGL…VHPDQHVYLA (87 aa). The Peptidase S8 domain occupies 131-421; it reads RWGLGYMSSK…ERKFTLPKYY (291 aa). Active-site charge relay system residues include D169 and H201. N248, N261, and N348 each carry an N-linked (GlcNAc...) asparagine glycan. S357 (charge relay system) is an active-site residue. N388 carries N-linked (GlcNAc...) asparagine glycosylation.

It belongs to the peptidase S8 family.

The protein localises to the secreted. Functionally, secreted subtilisin-like serine protease with keratinolytic activity that contributes to pathogenicity. This is Subtilisin-like protease 2 (SUB2) from Trichophyton verrucosum (strain HKI 0517).